Here is a 100-residue protein sequence, read N- to C-terminus: Transcription and mRNA export factor SUS1 (100 aa).

It belongs to the ENY2 family. Component of the nuclear pore complex (NPC)-associated TREX-2 complex (transcription and export complex 2), composed of at least SUS1, SAC3, THP1, SEM1, and CDC31. TREX-2 contains 2 SUS1 chains. The TREX-2 complex interacts with the nucleoporin NUP1. Component of the 1.8 MDa SAGA transcription coactivator-HAT complex. SAGA is built of 5 distinct domains with specialized functions. Within the SAGA complex, SUS1, SGF11, SGF73 and UBP8 form an additional subcomplex of SAGA called the DUB module (deubiquitination module). Interacts directly with THP1, SAC3, SGF11, and with the RNA polymerase II.

It localises to the nucleus. It is found in the nucleoplasm. The protein resides in the cytoplasm. The protein localises to the P-body. Functionally, involved in mRNA export coupled transcription activation by association with both the TREX-2 and the SAGA complexes. At the promoters, SAGA is required for recruitment of the basal transcription machinery. It influences RNA polymerase II transcriptional activity through different activities such as TBP interaction and promoter selectivity, interaction with transcription activators, and chromatin modification through histone acetylation and deubiquitination. Within the SAGA complex, participates in a subcomplex required for deubiquitination of H2B and for the maintenance of steady-state H3 methylation levels. The TREX-2 complex functions in docking export-competent ribonucleoprotein particles (mRNPs) to the nuclear entrance of the nuclear pore complex (nuclear basket). TREX-2 participates in mRNA export and accurate chromatin positioning in the nucleus by tethering genes to the nuclear periphery. May also be involved in cytoplasmic mRNA decay by interaction with components of P-bodies. This chain is Transcription and mRNA export factor SUS1, found in Candida glabrata (strain ATCC 2001 / BCRC 20586 / JCM 3761 / NBRC 0622 / NRRL Y-65 / CBS 138) (Yeast).